A 328-amino-acid chain; its full sequence is Sin3 histone deacetylase corepressor complex component SDS3 (328 aa).

The segment covering 1-22 (MSAAGLLAPAPAPAAAPAAPEY) has biased composition (low complexity). Residues 1 to 69 (MSAAGLLAPA…HDEEDYVEMK (69 aa)) form a disordered region. Serine 2 carries the post-translational modification N-acetylserine. The interval 2–170 (SAAGLLAPAP…IENEKLTMEL (169 aa)) is mediates interaction with USP17L2. 2 stretches are compositionally biased toward acidic residues: residues 23–37 (YPED…EDDE) and 45–54 (SDEDTEDASE). Serine 32 and serine 45 each carry phosphoserine. Threonine 49 carries the phosphothreonine modification. A Phosphoserine modification is found at serine 53. Basic and acidic residues predominate over residues 56–69 (DLAKHDEEDYVEMK). Positions 66–171 (VEMKEQMYQD…ENEKLTMELT (106 aa)) form a coiled coil. Residues lysine 69, lysine 178, and lysine 201 each participate in a glycyl lysine isopeptide (Lys-Gly) (interchain with G-Cter in SUMO2) cross-link. Residues 188-226 (RPNDPVPIPDKRRKPAPAQLNYLLTDEQIMEDLRTLNKL) form a sin3 interaction domain (SID) region. Residues 226 to 252 (LKSPKRPASPSSPEHLPATPAESPAQR) are disordered. A phosphoserine mark is found at serine 228, serine 234, and serine 237. Residue threonine 244 is modified to Phosphothreonine.

Belongs to the SDS3 family. In terms of assembly, interacts with HCFC1. Homodimer. Component of the SIN3 histone deacetylase (HDAC) corepressor complex. Interacts with SIN3A. Interaction with SIN3B enhances the interaction between SIN3B and HDAC1 to form a complex. Component of a mSin3A corepressor complex that contains SIN3A, SAP130, SUDS3/SAP45, ARID4B/SAP180, HDAC1 and HDAC2. Interacts with USP17L2; the interaction is direct. Interacts with FOXK2. In terms of processing, polyubiquitinated. 'Lys-63'-polyubiquitinated SUDS3 positively regulates histone deacetylation. Regulated through deubiquitination by USP17L2/USP17 that cleaves 'Lys-63'-linked ubiquitin chains. As to expression, expressed in all newborn tissues tested, including brain, kidney and liver.

Its subcellular location is the nucleus. Regulatory protein which represses transcription and augments histone deacetylase activity of HDAC1. May have a potential role in tumor suppressor pathways through regulation of apoptosis. May function in the assembly and/or enzymatic activity of the mSin3A corepressor complex or in mediating interactions between the complex and other regulatory complexes. This Mus musculus (Mouse) protein is Sin3 histone deacetylase corepressor complex component SDS3 (Suds3).